A 255-amino-acid chain; its full sequence is Protein YIPF7 (255 aa).

Over 1 to 124 (MSNLGQFDSD…ADGSIMNETD (124 aa)) the chain is Cytoplasmic. The chain crosses the membrane as a helical span at residues 125-145 (LTGPILFCMALGATLLLAGKV). Residue glutamine 146 is a topological domain, lumenal. A helical membrane pass occupies residues 147–167 (FGYVYGMSAIGCLGIHALLNL). Residues 168 to 180 (MSSSGVSYGCVAS) lie on the Cytoplasmic side of the membrane. The helical transmembrane segment at 181 to 201 (VLGYCLLPMVILSSCAIFFSL) threads the bilayer. The Lumenal portion of the chain corresponds to 202–204 (QGT). A helical membrane pass occupies residues 205–225 (FGTVSALVIIGWCSLSASKIF). Topologically, residues 226 to 234 (TSALAMEGQ) are cytoplasmic. The chain crosses the membrane as a helical span at residues 235–255 (QLLIAYPCALLYGLFALVTVF).

It belongs to the YIP1 family.

It localises to the endoplasmic reticulum membrane. The protein resides in the golgi apparatus. The protein localises to the cis-Golgi network membrane. It is found in the trans-Golgi network membrane. This chain is Protein YIPF7 (YIPF7), found in Bos taurus (Bovine).